A 395-amino-acid polypeptide reads, in one-letter code: uncharacterized protein (395 aa).

This is an uncharacterized protein from Escherichia coli (strain K12).